The chain runs to 252 residues: tRNA (guanine-N(1)-)-methyltransferase (252 aa).

Residues glycine 113 and 133 to 138 (IGDYVL) contribute to the S-adenosyl-L-methionine site. The segment covering 229–238 (VARPAANAPA) has biased composition (low complexity). The tract at residues 229 to 252 (VARPAANAPAKGESQKTPKNKTDG) is disordered. Basic and acidic residues predominate over residues 241 to 252 (ESQKTPKNKTDG).

The protein belongs to the RNA methyltransferase TrmD family. In terms of assembly, homodimer.

It is found in the cytoplasm. The catalysed reaction is guanosine(37) in tRNA + S-adenosyl-L-methionine = N(1)-methylguanosine(37) in tRNA + S-adenosyl-L-homocysteine + H(+). Specifically methylates guanosine-37 in various tRNAs. This Rhodopseudomonas palustris (strain HaA2) protein is tRNA (guanine-N(1)-)-methyltransferase.